Here is a 1031-residue protein sequence, read N- to C-terminus: Error-prone DNA polymerase (1031 aa).

This sequence belongs to the DNA polymerase type-C family. DnaE2 subfamily.

The protein resides in the cytoplasm. The enzyme catalyses DNA(n) + a 2'-deoxyribonucleoside 5'-triphosphate = DNA(n+1) + diphosphate. In terms of biological role, DNA polymerase involved in damage-induced mutagenesis and translesion synthesis (TLS). It is not the major replicative DNA polymerase. The sequence is that of Error-prone DNA polymerase from Pseudomonas syringae pv. syringae (strain B728a).